The primary structure comprises 143 residues: Phosphoprotein 32 (143 aa).

Positions 1–14 (MESSNINALQQPSS) are enriched in polar residues. The segment at 1–32 (MESSNINALQQPSSIAHHPSKQCASSLNETVK) is disordered.

It belongs to the varicellovirus ORF32 protein family. In terms of processing, phosphorylated by ORF47 protein.

This Homo sapiens (Human) protein is Phosphoprotein 32.